The chain runs to 114 residues: T cell receptor beta variable 6-4 (114 aa).

The signal sequence occupies residues 1–21 (MSIRLLCCVAFSLLWAGPVTA). Positions 22-114 (GITQAPTSQI…TSVYFCASSD (93 aa)) constitute an Ig-like domain. Cysteine 42 and cysteine 110 are disulfide-bonded.

As to quaternary structure, alpha-beta TR is a heterodimer composed of an alpha and beta chain; disulfide-linked. The alpha-beta TR is associated with the transmembrane signaling CD3 coreceptor proteins to form the TR-CD3 (TcR or TCR). The assembly of alpha-beta TR heterodimers with CD3 occurs in the endoplasmic reticulum where a single alpha-beta TR heterodimer associates with one CD3D-CD3E heterodimer, one CD3G-CD3E heterodimer and one CD247 homodimer forming a stable octameric structure. CD3D-CD3E and CD3G-CD3E heterodimers preferentially associate with TR alpha and TR beta chains, respectively. The association of the CD247 homodimer is the last step of TcR assembly in the endoplasmic reticulum and is required for transport to the cell surface.

It localises to the cell membrane. Its function is as follows. V region of the variable domain of T cell receptor (TR) beta chain that participates in the antigen recognition. Alpha-beta T cell receptors are antigen specific receptors which are essential to the immune response and are present on the cell surface of T lymphocytes. Recognize peptide-major histocompatibility (MH) (pMH) complexes that are displayed by antigen presenting cells (APC), a prerequisite for efficient T cell adaptive immunity against pathogens. Binding of alpha-beta TR to pMH complex initiates TR-CD3 clustering on the cell surface and intracellular activation of LCK that phosphorylates the ITAM motifs of CD3G, CD3D, CD3E and CD247 enabling the recruitment of ZAP70. In turn ZAP70 phosphorylates LAT, which recruits numerous signaling molecules to form the LAT signalosome. The LAT signalosome propagates signal branching to three major signaling pathways, the calcium, the mitogen-activated protein kinase (MAPK) kinase and the nuclear factor NF-kappa-B (NF-kB) pathways, leading to the mobilization of transcription factors that are critical for gene expression and essential for T cell growth and differentiation. The T cell repertoire is generated in the thymus, by V-(D)-J rearrangement. This repertoire is then shaped by intrathymic selection events to generate a peripheral T cell pool of self-MH restricted, non-autoaggressive T cells. Post-thymic interaction of alpha-beta TR with the pMH complexes shapes TR structural and functional avidity. This Homo sapiens (Human) protein is T cell receptor beta variable 6-4.